Reading from the N-terminus, the 334-residue chain is N-acetyl-gamma-glutamyl-phosphate reductase (334 aa).

The active site involves cysteine 154.

This sequence belongs to the NAGSA dehydrogenase family. Type 1 subfamily.

It localises to the cytoplasm. It catalyses the reaction N-acetyl-L-glutamate 5-semialdehyde + phosphate + NADP(+) = N-acetyl-L-glutamyl 5-phosphate + NADPH + H(+). It participates in amino-acid biosynthesis; L-arginine biosynthesis; N(2)-acetyl-L-ornithine from L-glutamate: step 3/4. Its function is as follows. Catalyzes the NADPH-dependent reduction of N-acetyl-5-glutamyl phosphate to yield N-acetyl-L-glutamate 5-semialdehyde. The chain is N-acetyl-gamma-glutamyl-phosphate reductase from Shigella flexneri.